The following is a 502-amino-acid chain: MEKQSFSDGLFSPLGIKRVIFMLVLLTTSFISCSNSDEKGGSLEVAQEYRNLEFDARGSRQTIQIDGPAEWHISTSESWCKSSHTIGEGKQYVNITVEANDTQKERTATVTVSASGAPDIIINVKQSLYSVPAYDEYIAPDNTGMRDLTSMQLSALMKAGVNVGNTFEAVIVGNDGSLSGDETCWGNPTPNKVLFEGIKAAGFDVVRIPVAYSHQFEDAATYKIKSAWMDKVEAAVKAALDAGLYVIINIHWEGGWLNHPVDANKEALDERLEAMWKQIALRFRDYDDRLLFAGTNEVNNDDANGAQPTEENYRVQNGFNQVFVNTVRATGGRNHYRHLIVQAYNTDVAKAVAHFTMPLDIVQNRIFLECHYYDPYDFTIMPNDENFKSQWGAAFAGGDVSATGQEGDIEATLSSLNVFINNNVPVIIGEYGPTLRDQLTGEALENHLKSRNDYIEYVVKTCVKNKLVPLYWDAGYTEKLFDRTTGQPHNAASIAAIMKGLN.

An N-terminal signal peptide occupies residues 1-32 (MEKQSFSDGLFSPLGIKRVIFMLVLLTTSFIS). C33 carries the N-palmitoyl cysteine lipid modification. C33 carries S-diacylglycerol cysteine lipidation. In terms of domain architecture, BACON spans 67–127 (GPAEWHISTS…PDIIINVKQS (61 aa)). Positions 165, 172, 251, and 296 each coordinate substrate. The Proton donor role is filled by E297. Catalysis depends on E430, which acts as the Nucleophile. W472 provides a ligand contact to substrate.

It belongs to the glycosyl hydrolase 5 (cellulase A) family.

It localises to the cell outer membrane. It carries out the reaction xyloglucan + H2O = xyloglucan oligosaccharides.. Its pathway is glucan metabolism; xyloglucan degradation. Catalyzes endohydrolysis of 1,4-beta-D-glucosidic linkages in xyloglucan with retention of the beta-configuration of the glycosyl residues in xyloglucan degradation. Cleaves the backbone of the 3 major types of natural xyloglucans (seed galactoxyloglucan from tamarind kernel, dicot fucogalactoxyloglucan from lettuce leaves, and solanaceous arabinogalactoxyloglucan from tomato fruit), to produce xyloglucan oligosaccharides. This chain is Xyloglucan-specific endo-beta-1,4-glucanase BoGH5A, found in Bacteroides ovatus (strain ATCC 8483 / DSM 1896 / JCM 5824 / BCRC 10623 / CCUG 4943 / NCTC 11153).